A 140-amino-acid polypeptide reads, in one-letter code: Mercuric transport protein MerC (140 aa).

Over 2-10 (GLMTRIADK) the chain is Cytoplasmic. The helical transmembrane segment at 11–31 (TGALGSVVSAMGCAACFPALA) threads the bilayer. Hg(2+) contacts are provided by glycine 22 and alanine 25. The Periplasmic portion of the chain corresponds to 32 to 46 (SFGAAIGLGFLSQYE). The helical transmembrane segment at 47-67 (GLFISRLLPLFAALAFLANAL) threads the bilayer. The Cytoplasmic segment spans residues 68 to 78 (GWFSHRQWLRS). The helical transmembrane segment at 79–99 (LLGMIGPAIVFAATVWLLGNW) threads the bilayer. Residues 100–106 (WTANLMY) lie on the Periplasmic side of the membrane. A helical transmembrane segment spans residues 107 to 127 (VGLALMIGVSIWDFVSPAHRR). The Cytoplasmic segment spans residues 128 to 140 (CGPDGCELPAKRL).

The protein localises to the cell inner membrane. With respect to regulation, uptake of Hg(2+) is decreased by iodoacetamide and iodoacetate, and is completely inhibited by the thiol-modifying reagent N-ethylmaleimide (NEM). Its function is as follows. Involved in mercuric ion uptake and binding. MerC-mediated Hg(2+) uptake does not require MerP. The chain is Mercuric transport protein MerC from Shigella flexneri.